The primary structure comprises 209 residues: Large ribosomal subunit protein uL3 (209 aa).

Residues 122–152 (AIKRHGQSRGPMSHGSRYHRRPGSMGPVDPN) are disordered.

This sequence belongs to the universal ribosomal protein uL3 family. In terms of assembly, part of the 50S ribosomal subunit. Forms a cluster with proteins L14 and L19. Interacts with RNA helicase CshA.

In terms of biological role, one of the primary rRNA binding proteins, it binds directly near the 3'-end of the 23S rRNA, where it nucleates assembly of the 50S subunit. Strongly stimulates 23S rRNA precursor processing by mini-ribonuclease 3 (MrnC); 20-30% DMSO can replace L3, suggesting the protein may alter rRNA conformation. The polypeptide is Large ribosomal subunit protein uL3 (Bacillus subtilis (strain 168)).